We begin with the raw amino-acid sequence, 726 residues long: MAR-binding filament-like protein 1 (726 aa).

Residues 1–41 constitute a chloroplast transit peptide; sequence MGFLIGGSCFVPSVPLHSRFLSSPSSSSSSSPSSSQFGLLC. A thylakoid-targeting transit peptide spans 42–95; sequence SSNVAKFKRRRPTLASLNQEDGYEYDVASAKRRAFLLVGISVLPFLQLRSPALA. Residues 96–124 are Lumenal, thylakoid-facing; it reads DERGNEIKTSKVDLETEVAVVSEGTSPNP. Residues 125–145 traverse the membrane as a helical segment; that stretch reads FLALLNGLGIFSAGVLGALYA. Positions 144–691 form a coiled coil; it reads YALARQDTKA…KGEILRMRSQ (548 aa). Residues 146–726 lie on the Stromal side of the membrane; it reads LARQDTKAAE…VRRRKSSTSS (581 aa). The tract at residues 678–726 is disordered; that stretch reads LGSAKGEILRMRSQPDSVKAVNSTDNKEKSDNTVTVKKVVRRRKSSTSS. A compositionally biased stretch (polar residues) spans 691–701; the sequence is QPDSVKAVNST. Positions 715 to 722 match the Nuclear localization signal motif; it reads KVVRRRKS. A compositionally biased stretch (basic residues) spans 715-726; it reads KVVRRRKSSTSS.

Interacts with PTST2; the interaction is essential for the initiation of starch granules biosynthesis in leaf chloroplasts, for the correct location of the process in the stromal spaces between the thylakoid membranes, and for the association of PTST2 with the thylakoid membranes. Predicted to be translocated into the thylakoid by the Tat system. The position of the transit peptide cleavages have not been experimentally proven.

The protein localises to the plastid. It is found in the chloroplast. It localises to the chloroplast thylakoid membrane. The protein resides in the chloroplast stroma. Its subcellular location is the chloroplast nucleoid. The protein localises to the nucleus. It is found in the nucleus matrix. Its function is as follows. DNA-binding protein required for the initiation of starch granules biosynthesis in leaf chloroplasts. Anchored to the thylakoid membranes with its C-terminus facing into the stroma where it is essential for localizing PTST2 and SS4 to the stromal spaces between the thylakoid membranes in order to begin starch granule formation. Associated with leaf chloroplastic nucleoids in vivo. Binds to various chloroplastic double-stranded DNA fragments without particular sequence specificity in vitro. May function at the interface between nucleoids and thylakoids possibly by anchoring nucleoids to the thylakoid membrane system in mature chloroplasts. Likely to participate in nuclear architecture by connecting chromatin with the nuclear matrix and potentially with the nuclear envelope. The protein is MAR-binding filament-like protein 1 of Arabidopsis thaliana (Mouse-ear cress).